Here is a 585-residue protein sequence, read N- to C-terminus: Rab GTPase-binding effector protein 2 (585 aa).

Ala2 is modified (N-acetylalanine). Positions 27 to 183 form a coiled coil; the sequence is QEGAKVEAES…ELIQEIQRRP (157 aa). 3 disordered regions span residues 178 to 265, 381 to 408, and 491 to 515; these read EIQR…ASLV, ENQG…EESL, and EEQS…EEAQ. Residues Ser188, Ser192, Ser198, and Ser202 each carry the phosphoserine modification. Positions 288–540 form a coiled coil; the sequence is NQWEQLQLEG…QAELETSEQV (253 aa). The span at 491-501 shows a compositional bias: basic and acidic residues; sequence EEQSKAKRQEV.

This sequence belongs to the rabaptin family. Heterodimer with RABGEF1. The dimer binds RAB5A that has been activated by GTP-binding. Interacts with SDCCAG8; this interaction is important for ciliogenesis regulation. Interacts with RAB4; this interaction may mediate VEGFR2 cell surface expression.

Its subcellular location is the cytoplasm. It is found in the early endosome. It localises to the cytoskeleton. The protein localises to the microtubule organizing center. The protein resides in the centrosome. Its subcellular location is the cilium basal body. Its function is as follows. Plays a role in membrane trafficking and in homotypic early endosome fusion. Participates in arteriogenesis by regulating vascular endothelial growth factor receptor 2/VEGFR2 cell surface expression and endosomal trafficking. By interacting with SDCCAG8, localizes to centrosomes and plays a critical role in ciliogenesis. The polypeptide is Rab GTPase-binding effector protein 2 (RABEP2) (Bos taurus (Bovine)).